The chain runs to 253 residues: Tryptophan synthase alpha chain (253 aa).

Catalysis depends on proton acceptor residues glutamate 48 and aspartate 59.

This sequence belongs to the TrpA family. As to quaternary structure, tetramer of two alpha and two beta chains.

The catalysed reaction is (1S,2R)-1-C-(indol-3-yl)glycerol 3-phosphate + L-serine = D-glyceraldehyde 3-phosphate + L-tryptophan + H2O. The protein operates within amino-acid biosynthesis; L-tryptophan biosynthesis; L-tryptophan from chorismate: step 5/5. Its function is as follows. The alpha subunit is responsible for the aldol cleavage of indoleglycerol phosphate to indole and glyceraldehyde 3-phosphate. The polypeptide is Tryptophan synthase alpha chain (Caldicellulosiruptor saccharolyticus (strain ATCC 43494 / DSM 8903 / Tp8T 6331)).